The primary structure comprises 443 residues: tRNA modification GTPase MnmE (443 aa).

3 residues coordinate (6S)-5-formyl-5,6,7,8-tetrahydrofolate: Arg23, Glu81, and Lys119. Residues 214–369 (GMRVAILGKP…LLSALKERAI (156 aa)) enclose the TrmE-type G domain. Residues 224–229 (NVGKST), 243–249 (SEYPGTT), and 268–271 (DTAG) each bind GTP. Mg(2+) contacts are provided by Ser228 and Thr249. Lys443 is a (6S)-5-formyl-5,6,7,8-tetrahydrofolate binding site.

The protein belongs to the TRAFAC class TrmE-Era-EngA-EngB-Septin-like GTPase superfamily. TrmE GTPase family. In terms of assembly, homodimer. Heterotetramer of two MnmE and two MnmG subunits. The cofactor is K(+).

It localises to the cytoplasm. In terms of biological role, exhibits a very high intrinsic GTPase hydrolysis rate. Involved in the addition of a carboxymethylaminomethyl (cmnm) group at the wobble position (U34) of certain tRNAs, forming tRNA-cmnm(5)s(2)U34. This Anaplasma marginale (strain St. Maries) protein is tRNA modification GTPase MnmE.